We begin with the raw amino-acid sequence, 204 residues long: Urease accessory protein UreG 1 (204 aa).

14 to 21 (GPVGSGKT) lines the GTP pocket.

This sequence belongs to the SIMIBI class G3E GTPase family. UreG subfamily. In terms of assembly, homodimer. UreD, UreF and UreG form a complex that acts as a GTP-hydrolysis-dependent molecular chaperone, activating the urease apoprotein by helping to assemble the nickel containing metallocenter of UreC. The UreE protein probably delivers the nickel.

It is found in the cytoplasm. In terms of biological role, facilitates the functional incorporation of the urease nickel metallocenter. This process requires GTP hydrolysis, probably effectuated by UreG. The protein is Urease accessory protein UreG 1 of Methylorubrum populi (strain ATCC BAA-705 / NCIMB 13946 / BJ001) (Methylobacterium populi).